The following is a 1784-amino-acid chain: Sodium channel protein type 4 subunit alpha B (1784 aa).

At 1–130 (MARLLPPTGT…RAAIRILIHS (130 aa)) the chain is on the cytoplasmic side. A disordered region spans residues 29 to 48 (AEEAAEQERMKEQNVKVAEE). One copy of the I repeat lies at 112 to 429 (CLSPFNPVRR…VVAMAYAEQN (318 aa)). A helical transmembrane segment spans residues 131–149 (LFSLVIMLTILTNCVFMAM). Over 150 to 156 (SDPPGWS) the chain is Extracellular. The helical transmembrane segment at 157–177 (KILEYVFTGIYTFEAMVKVLS) threads the bilayer. Over 178 to 191 (RGFCIGDFTFLRDP) the chain is Cytoplasmic. Residues 192-209 (WNWLDFMVISMAYLTEFV) traverse the membrane as a helical segment. The Extracellular portion of the chain corresponds to 210-215 (DLGNIS). The N-linked (GlcNAc...) asparagine glycan is linked to Asn-213. A helical membrane pass occupies residues 216–232 (ALRTFRVLRALKTITVI). Residues 233–251 (PGLKTIVGALIQSVKKLAD) are Cytoplasmic-facing. Residues 252–271 (VMILTVFCLSVFALIGLQLF) traverse the membrane as a helical segment. The Extracellular portion of the chain corresponds to 272–366 (MGNLRQKCVL…PNYGYTSYDN (95 aa)). Cys-279 and Cys-335 are disulfide-bonded. N-linked (GlcNAc...) asparagine glycosylation is found at Asn-291, Asn-304, and Asn-337. An intrachain disulfide couples Cys-344 to Cys-350. The segment at residues 367–391 (FGWAFLALFRLMTQDFWENLFQLTL) is an intramembrane region (pore-forming). Residues 392-398 (RAAGKTY) lie on the Extracellular side of the membrane. Residues 399–419 (MIFFVVIIFLGSFYLINLILA) traverse the membrane as a helical segment. At 420–568 (VVAMAYAEQN…RIVYLFVMDP (149 aa)) the chain is on the cytoplasmic side. The tract at residues 455 to 478 (EQKNGMVNGSKTSLSSKKKGDNDQ) is disordered. The II repeat unit spans residues 550–821 (CCIPWVKFKR…QIAISRITRG (272 aa)). A helical membrane pass occupies residues 569–587 (FVDLGITLCIVLNTVFMAM). Residues 588 to 598 (EHYPMSVHVEE) are Extracellular-facing. Residues 599–618 (VLAIGNLVFTGIFAAEMVLK) form a helical membrane-spanning segment. The Cytoplasmic portion of the chain corresponds to 619–632 (LIALDPYYYFQVGW). A helical transmembrane segment spans residues 633–652 (NIFDSIIVTMSLVELMLADV). At 653–654 (EG) the chain is on the extracellular side. A helical membrane pass occupies residues 655-672 (LSVLRSFRLMRVFKLAKS). Over 673–688 (WPTLNMLIKIIGNSVG) the chain is Cytoplasmic. A helical membrane pass occupies residues 689–707 (ALGNLTLVLAIIVFIFAVV). The Extracellular segment spans residues 708–736 (GMQLFGKSYTDSVCKISSDCELPRWHMAD). A disulfide bond links Cys-721 and Cys-727. The pore-forming intramembrane region spans 737-757 (FFHAFLIIFRVLCGEWIETMW). At 758–768 (DCMEVAGQGMC) the chain is on the extracellular side. A disulfide bridge links Cys-759 with Cys-768. The chain crosses the membrane as a helical span at residues 769–787 (IIVFMMVMVIGNLVVLNLF). Over 788 to 973 (LALLLSSFSG…TCFAIVEHSY (186 aa)) the chain is Cytoplasmic. A disordered region spans residues 870 to 928 (PIANGESDDDDGNGSSEDEDDEGRDINMKKKNGDESSTCSTVDKPPEVEDLVEEEEEDL). Residues 875–892 (ESDDDDGNGSSEDEDDEG) show a composition bias toward acidic residues. The span at 893–903 (RDINMKKKNGD) shows a compositional bias: basic and acidic residues. Residues 917 to 928 (VEDLVEEEEEDL) show a composition bias toward acidic residues. The III repeat unit spans residues 954 to 1269 (KGKAWWNFRK…KKYYNAMKKL (316 aa)). The helical transmembrane segment at 974 to 991 (FETFIIFMILLSSGALAF) threads the bilayer. At 992–1004 (EDIYIEQRRMIKI) the chain is on the extracellular side. Residues 1005 to 1023 (ILEYADQVFTYVFVVEMLL) form a helical membrane-spanning segment. Over 1024–1037 (KWVAYGFKVYFTNA) the chain is Cytoplasmic. A helical transmembrane segment spans residues 1038-1056 (WCWLDFLIVDVSLISLTAN). The Extracellular segment spans residues 1057-1064 (ILGYSELG). The chain crosses the membrane as a helical span at residues 1065–1083 (AIKSLRTLRALRPLRALSR). Over 1084 to 1101 (FEGMRVVVVNALVGAIPS) the chain is Cytoplasmic. Residues 1102–1121 (IFNVLLVCLIFWLIFSIMGV) form a helical membrane-spanning segment. Over 1122 to 1173 (NLFAGKFYYCFNETSEEVFDHNVVNNKTDCYELMEFHPEVRWMNGKINFDNV) the chain is Extracellular. Cysteines 1131 and 1151 form a disulfide. Residues Asn-1133 and Asn-1147 are each glycosylated (N-linked (GlcNAc...) asparagine). An intramembrane region (pore-forming) is located at residues 1174-1195 (GMGYLALLQVATFKGWMDIMYS). Over 1196-1212 (AVDSRAIESQPVYEANL) the chain is Extracellular. Residues 1213-1234 (YMYIYFVIFIIFGSFFTLNLFI) form a helical membrane-spanning segment. Topologically, residues 1235-1297 (GVIIDNFNQQ…LVFDFVTQQF (63 aa)) are cytoplasmic. Positions 1253-1255 (IFM) are important for rapid channel inactivation. One copy of the IV repeat lies at 1278–1575 (IPRPTNCCQG…WEKFDPTASQ (298 aa)). Residues 1298–1315 (FDIFIMVMICLNMVTMMV) form a helical membrane-spanning segment. Residues 1316–1326 (ETDDQSAEIEE) are Extracellular-facing. A helical membrane pass occupies residues 1327–1345 (ILFYINFAFIILFTGECVL). Residues 1346–1357 (KITALRYHYFSI) are Cytoplasmic-facing. The chain crosses the membrane as a helical span at residues 1358-1375 (GWNIFDFVVVILSILGIG). The Extracellular segment spans residues 1376 to 1388 (LADLIEKYFVSPT). Residues 1389 to 1405 (LFRVIRLARIGRVLRLI) traverse the membrane as a helical segment. Over 1406 to 1424 (RGAKGIRTLLFALMMSLPA) the chain is Cytoplasmic. Residues 1425–1442 (LFNIGLLLFLIMFIFSIF) traverse the membrane as a helical segment. Topologically, residues 1443 to 1464 (GMSNFAYVKKEVGIDDMMNFET) are extracellular. The pore-forming intramembrane region spans 1465 to 1487 (FGNSIICMFMITTSAGWDGLLAP). Over 1488–1516 (ILNSPPDCDPDVDNPGSTTRGNCGNAAVG) the chain is Extracellular. Cys-1495 and Cys-1510 are disulfide-bonded. Residues 1517–1539 (IVFFCSYIVMSFLVVVNMYIAII) traverse the membrane as a helical segment. The Cytoplasmic portion of the chain corresponds to 1540-1784 (LENFNVATEE…AADNLRESIV (245 aa)). Residues 1669 to 1698 (EEVAASTIQRAYRSHILKRCVKQASYMYRD) form the IQ domain.

This sequence belongs to the sodium channel (TC 1.A.1.10) family. Nav1.4/SCN4A subfamily. Voltage-gated sodium (Nav) channels consist of an ion-conducting alpha subunit which is functional on its own associated with regulatory beta subunits. Lacks the cysteine which covalently binds the conotoxin GVIIJ. This cysteine (position 719) is speculated in other sodium channel subunits alpha to be implied in covalent binding with the sodium channel subunit beta-2 or beta-4. Expressed in skeletal muscle, heart, brain, spinal cord, and eye.

It is found in the cell membrane. It carries out the reaction Na(+)(in) = Na(+)(out). In terms of biological role, pore-forming subunit of a voltage-gated sodium (Nav) channel that directly mediates the depolarizing phase of action potentials in excitable membranes. Navs, also called VGSCs (voltage-gated sodium channels) or VDSCs (voltage-dependent sodium channels), operate by switching between closed and open conformations depending on the voltage difference across the membrane. In the open conformation they allow Na(+) ions to selectively pass through the pore, along their electrochemical gradient. The influx of Na+ ions provokes membrane depolarization, initiating the propagation of electrical signals throughout cells and tissues. The sequence is that of Sodium channel protein type 4 subunit alpha B (scn4ab) from Danio rerio (Zebrafish).